We begin with the raw amino-acid sequence, 246 residues long: MKLIIGVITLFPQMFDALKSGVIGRALKQDRLTLSFWNPRDYATDPHRTVDDRPYGGGPGMVMKFEPLALALKAAKAQLGENTKVIHLTPQGKLLTQAIVREKIHASPLILLAGRYEGIDERLIEAEVDEEWSIGDYILSGGELPAMVLIDAMTRLLPGVLGHKDSASQDSFTAGLLDYPHYTRPEKIADRPVPSVLLSGDHEAISRWRLKQSLGRTWQRRQDLIKRRSLSENEQRLLDEFFEESS.

S-adenosyl-L-methionine is bound by residues Gly114 and Ile134–Leu139.

Belongs to the RNA methyltransferase TrmD family. As to quaternary structure, homodimer.

Its subcellular location is the cytoplasm. The enzyme catalyses guanosine(37) in tRNA + S-adenosyl-L-methionine = N(1)-methylguanosine(37) in tRNA + S-adenosyl-L-homocysteine + H(+). Its function is as follows. Specifically methylates guanosine-37 in various tRNAs. This Coxiella burnetii (strain CbuK_Q154) (Coxiella burnetii (strain Q154)) protein is tRNA (guanine-N(1)-)-methyltransferase.